Here is a 154-residue protein sequence, read N- to C-terminus: Ribonuclease H (154 aa).

In terms of domain architecture, RNase H type-1 spans 1-142 (MTKQVEIFTD…CDELAREGAN (142 aa)). Residues aspartate 10, glutamate 48, aspartate 70, and aspartate 134 each coordinate Mg(2+).

This sequence belongs to the RNase H family. As to quaternary structure, monomer. Mg(2+) serves as cofactor.

It is found in the cytoplasm. It carries out the reaction Endonucleolytic cleavage to 5'-phosphomonoester.. In terms of biological role, endonuclease that specifically degrades the RNA of RNA-DNA hybrids. The polypeptide is Ribonuclease H (Yersinia enterocolitica serotype O:8 / biotype 1B (strain NCTC 13174 / 8081)).